A 30-amino-acid chain; its full sequence is GSVIKCGESCLLGKCYTPGCTCSRPICKKN.

The segment at residues 1 to 30 (GSVIKCGESCLLGKCYTPGCTCSRPICKKN) is a cross-link (cyclopeptide (Gly-Asn)). 3 disulfides stabilise this stretch: Cys-6–Cys-20, Cys-10–Cys-22, and Cys-15–Cys-27.

In terms of processing, contains 3 disulfide bonds. Post-translationally, this is a cyclic peptide. As to expression, expressed in root nodules but not in seed.

In terms of biological role, probably participates in a plant defense mechanism. Active against Gram-negative bacterium E.coli ATCC 700926 (MIC=0.6 uM) under low-salt conditions. Not active against Gram-positive bacterium S.aureus ATCC 12600 up to a concentration of 100 uM under low-salt conditions. Exhibits immunomodulatory activity but no cytotoxicity in vitro. The sequence is that of Cliotide T19 from Clitoria ternatea (Butterfly pea).